The sequence spans 128 residues: Large ribosomal subunit protein bL19 (128 aa).

The protein belongs to the bacterial ribosomal protein bL19 family.

Functionally, this protein is located at the 30S-50S ribosomal subunit interface and may play a role in the structure and function of the aminoacyl-tRNA binding site. In Paraburkholderia xenovorans (strain LB400), this protein is Large ribosomal subunit protein bL19.